Reading from the N-terminus, the 396-residue chain is Serpin-ZXA (396 aa).

Residues 343–367 (GTEAAAATAAVITLRSAPIAEDFVA) are RCL.

Belongs to the serpin family.

Functionally, probable serine protease inhibitor. The sequence is that of Serpin-ZXA from Oryza sativa subsp. japonica (Rice).